Consider the following 1278-residue polypeptide: MTARGLALGLLLLLLCPAQVFSQSCVWYGECGIAYGDKRYNCEYSGPPKPLPKDGYDLVQELCPGFFFGNVSLCCDVRQLQTLKDNLQLPLQFLSRCPSCFYNLLNLFCELTCSPRQSQFLNVTATEDYVDPVTNQTKTNVKELQYYVGQSFANAMYNACRDVEAPSSNDKALGLLCGKDADACNATNWIEYMFNKDNGQAPFTITPVFSDFPVHGMEPMNNATKGCDESVDEVTAPCSCQDCSIVCGPKPQPPPPPAPWTILGLDAMYVIMWITYMAFLLVFFGAFFAVWCYRKRYFVSEYTPIDSNIAFSVNASDKGEASCCDPVSAAFEGCLRRLFTRWGSFCVRNPGCVIFFSLVFITACSSGLVFVRVTTNPVDLWSAPSSQARLEKEYFDQHFGPFFRTEQLIIRAPLTDKHIYQPYPSGADVPFGPPLDIQILHQVLDLQIAIENITASYDNETVTLQDICLAPLSPYNTNCTILSVLNYFQNSHSVLDHKKGDDFFVYADYHTHFLYCVRAPASLNDTSLLHDPCLGTFGGPVFPWLVLGGYDDQNYNNATALVITFPVNNYYNDTEKLQRAQAWEKEFINFVKNYKNPNLTISFTAERSIEDELNRESDSDVFTVVISYAIMFLYISLALGHMKSCRRLLVDSKVSLGIAGILIVLSSVACSLGVFSYIGLPLTLIVIEVIPFLVLAVGVDNIFILVQAYQRDERLQGETLDQQLGRVLGEVAPSMFLSSFSETVAFFLGALSVMPAVHTFSLFAGLAVFIDFLLQITCFVSLLGLDIKRQEKNRLDIFCCVRGAEDGTSVQASESCLFRFFKNSYSPLLLKDWMRPIVIAIFVGVLSFSIAVLNKVDIGLDQSLSMPDDSYMVDYFKSISQYLHAGPPVYFVLEEGHDYTSSKGQNMVCGGMGCNNDSLVQQIFNAAQLDNYTRIGFAPSSWIDDYFDWVKPQSSCCRVDNITDQFCNASVVDPACVRCRPLTPEGKQRPQGGDFMRFLPMFLSDNPNPKCGKGGHAAYSSAVNILLGHGTRVGATYFMTYHTVLQTSADFIDALKKARLIASNVTETMGINGSAYRVFPYSVFYVFYEQYLTIIDDTIFNLGVSLGAIFLVTMVLLGCELWSAVIMCATIAMVLVNMFGVMWLWGISLNAVSLVNLVMSCGISVEFCSHITRAFTVSMKGSRVERAEEALAHMGSSVFSGITLTKFGGIVVLAFAKSQIFQIFYFRMYLAMVLLGATHGLIFLPVLLSYIGPSVNKAKSCATEERYKGTERERLLNF.

Residues 1–22 form the signal peptide; the sequence is MTARGLALGLLLLLLCPAQVFS. The Lumenal portion of the chain corresponds to 23 to 261; the sequence is QSCVWYGECG…QPPPPPAPWT (239 aa). 9 cysteine pairs are disulfide-bonded: Cys25–Cys74, Cys31–Cys42, Cys63–Cys109, Cys75–Cys113, Cys97–Cys238, Cys100–Cys160, Cys177–Cys184, Cys227–Cys243, and Cys240–Cys247. Residue Asn41 participates in cholesterol binding. A glycan (N-linked (GlcNAc...) asparagine) is linked at Asn70. Gln79 contacts cholesterol. N-linked (GlcNAc...) asparagine glycosylation is found at Asn122 and Asn135. Residue Asn158 is glycosylated (N-linked (GlcNAc...) asparagine; atypical). Residues 175-205 are important for cholesterol binding and cholesterol transfer from NPC1 to liposomes; the sequence is LLCGKDADACNATNWIEYMFNKDNGQAPFTI. 2 N-linked (GlcNAc...) asparagine glycosylation sites follow: Asn185 and Asn222. The helical transmembrane segment at 262–282 threads the bilayer; it reads ILGLDAMYVIMWITYMAFLLV. Over 283-350 the chain is Cytoplasmic; that stretch reads FFGAFFAVWC…RWGSFCVRNP (68 aa). The chain crosses the membrane as a helical span at residues 351 to 371; sequence GCVIFFSLVFITACSSGLVFV. Topologically, residues 372 to 620 are lumenal; the sequence is RVTTNPVDLW…DELNRESDSD (249 aa). Residues Asn452, Asn459, Asn478, Asn524, Asn557, Asn572, and Asn598 are each glycosylated (N-linked (GlcNAc...) asparagine). 2 cysteine pairs are disulfide-bonded: Cys468/Cys479 and Cys516/Cys533. Positions 620-785 constitute an SSD domain; it reads DVFTVVISYA…ITCFVSLLGL (166 aa). Residues 621-641 form a helical membrane-spanning segment; sequence VFTVVISYAIMFLYISLALGH. Over 642 to 653 the chain is Cytoplasmic; that stretch reads MKSCRRLLVDSK. Residues 654–675 traverse the membrane as a helical segment; that stretch reads VSLGIAGILIVLSSVACSLGVF. Over 676 to 685 the chain is Lumenal; it reads SYIGLPLTLI. A helical membrane pass occupies residues 686-706; sequence VIEVIPFLVLAVGVDNIFILV. The Cytoplasmic segment spans residues 707-730; that stretch reads QAYQRDERLQGETLDQQLGRVLGE. Residues 731–751 form a helical membrane-spanning segment; sequence VAPSMFLSSFSETVAFFLGAL. The Lumenal segment spans residues 752–759; the sequence is SVMPAVHT. The chain crosses the membrane as a helical span at residues 760–783; that stretch reads FSLFAGLAVFIDFLLQITCFVSLL. The Cytoplasmic portion of the chain corresponds to 784-832; that stretch reads GLDIKRQEKNRLDIFCCVRGAEDGTSVQASESCLFRFFKNSYSPLLLKD. The chain crosses the membrane as a helical span at residues 833 to 853; sequence WMRPIVIAIFVGVLSFSIAVL. At 854–1097 the chain is on the lumenal side; the sequence is NKVDIGLDQS…YEQYLTIIDD (244 aa). A disulfide bridge links Cys909 with Cys914. Asn916, Asn931, Asn961, Asn968, Asn1064, and Asn1072 each carry an N-linked (GlcNAc...) asparagine glycan. Disulfide bonds link Cys956–Cys1011, Cys957–Cys979, and Cys967–Cys976. A helical transmembrane segment spans residues 1098–1118; the sequence is TIFNLGVSLGAIFLVTMVLLG. At 1119-1124 the chain is on the cytoplasmic side; it reads CELWSA. A helical transmembrane segment spans residues 1125–1145; it reads VIMCATIAMVLVNMFGVMWLW. Topologically, residues 1146–1150 are lumenal; it reads GISLN. The chain crosses the membrane as a helical span at residues 1151 to 1171; sequence AVSLVNLVMSCGISVEFCSHI. Topologically, residues 1172–1194 are cytoplasmic; it reads TRAFTVSMKGSRVERAEEALAHM. A helical transmembrane segment spans residues 1195–1215; the sequence is GSSVFSGITLTKFGGIVVLAF. At 1216–1223 the chain is on the lumenal side; the sequence is AKSQIFQI. A helical membrane pass occupies residues 1224–1244; the sequence is FYFRMYLAMVLLGATHGLIFL. Over 1245–1278 the chain is Cytoplasmic; sequence PVLLSYIGPSVNKAKSCATEERYKGTERERLLNF. The interval 1275–1278 is required for location in lysosomes; it reads LLNF. The Di-leucine motif signature appears at 1275-1278; that stretch reads LLNF.

This sequence belongs to the patched family. Interacts (via the second lumenal domain) with NPC2. Interacts with TMEM97; the interaction may decrease NPC1 availability to the cell. Interacts with TIM1. Interacts with SLC38A9; this interaction inhibits cholesterol-mediated mTORC1 activation via its sterol transport activity. In terms of assembly, (Microbial infection) Interacts with ebolavirus glycoprotein. Post-translationally, N-glycosylated.

It is found in the late endosome membrane. It localises to the lysosome membrane. It carries out the reaction cholesterol(in) = cholesterol(out). Its function is as follows. Intracellular cholesterol transporter which acts in concert with NPC2 and plays an important role in the egress of cholesterol from the endosomal/lysosomal compartment. Unesterified cholesterol that has been released from LDLs in the lumen of the late endosomes/lysosomes is transferred by NPC2 to the cholesterol-binding pocket in the N-terminal domain of NPC1. Cholesterol binds to NPC1 with the hydroxyl group buried in the binding pocket. Binds oxysterol with higher affinity than cholesterol. May play a role in vesicular trafficking in glia, a process that may be crucial for maintaining the structural and functional integrity of nerve terminals. Inhibits cholesterol-mediated mTORC1 activation throught its interaction with SLC38A9. In terms of biological role, (Microbial infection) Acts as an endosomal entry receptor for ebolavirus. The chain is NPC intracellular cholesterol transporter 1 from Homo sapiens (Human).